Reading from the N-terminus, the 284-residue chain is Bifunctional protein FolD (284 aa).

NADP(+) contacts are provided by residues 166 to 168 (GRS) and Ser191.

The protein belongs to the tetrahydrofolate dehydrogenase/cyclohydrolase family. In terms of assembly, homodimer.

It catalyses the reaction (6R)-5,10-methylene-5,6,7,8-tetrahydrofolate + NADP(+) = (6R)-5,10-methenyltetrahydrofolate + NADPH. The enzyme catalyses (6R)-5,10-methenyltetrahydrofolate + H2O = (6R)-10-formyltetrahydrofolate + H(+). The protein operates within one-carbon metabolism; tetrahydrofolate interconversion. Its function is as follows. Catalyzes the oxidation of 5,10-methylenetetrahydrofolate to 5,10-methenyltetrahydrofolate and then the hydrolysis of 5,10-methenyltetrahydrofolate to 10-formyltetrahydrofolate. The chain is Bifunctional protein FolD from Leptospira borgpetersenii serovar Hardjo-bovis (strain JB197).